The primary structure comprises 167 residues: Phosphopantetheine adenylyltransferase (167 aa).

Ser-11 is a binding site for substrate. Residues 11–12 and His-19 contribute to the ATP site; that span reads SF. Residues Lys-43, Thr-76, and Arg-90 each coordinate substrate. ATP is bound by residues 91–93, Glu-101, and 126–132; these read GIR and YDALSST.

It belongs to the bacterial CoaD family. Homohexamer. Mg(2+) is required as a cofactor.

It is found in the cytoplasm. The catalysed reaction is (R)-4'-phosphopantetheine + ATP + H(+) = 3'-dephospho-CoA + diphosphate. It functions in the pathway cofactor biosynthesis; coenzyme A biosynthesis; CoA from (R)-pantothenate: step 4/5. In terms of biological role, reversibly transfers an adenylyl group from ATP to 4'-phosphopantetheine, yielding dephospho-CoA (dPCoA) and pyrophosphate. The sequence is that of Phosphopantetheine adenylyltransferase from Lacticaseibacillus paracasei (strain ATCC 334 / BCRC 17002 / CCUG 31169 / CIP 107868 / KCTC 3260 / NRRL B-441) (Lactobacillus paracasei).